Consider the following 314-residue polypeptide: Methionyl-tRNA formyltransferase (314 aa).

111-114 (SLLP) is a (6S)-5,6,7,8-tetrahydrofolate binding site.

The protein belongs to the Fmt family.

It catalyses the reaction L-methionyl-tRNA(fMet) + (6R)-10-formyltetrahydrofolate = N-formyl-L-methionyl-tRNA(fMet) + (6S)-5,6,7,8-tetrahydrofolate + H(+). Its function is as follows. Attaches a formyl group to the free amino group of methionyl-tRNA(fMet). The formyl group appears to play a dual role in the initiator identity of N-formylmethionyl-tRNA by promoting its recognition by IF2 and preventing the misappropriation of this tRNA by the elongation apparatus. The chain is Methionyl-tRNA formyltransferase from Chlorobium chlorochromatii (strain CaD3).